A 470-amino-acid polypeptide reads, in one-letter code: UDP-N-acetylmuramoylalanine--D-glutamate ligase (470 aa).

Residue 121 to 127 (GTNGKST) participates in ATP binding.

It belongs to the MurCDEF family.

The protein localises to the cytoplasm. It carries out the reaction UDP-N-acetyl-alpha-D-muramoyl-L-alanine + D-glutamate + ATP = UDP-N-acetyl-alpha-D-muramoyl-L-alanyl-D-glutamate + ADP + phosphate + H(+). The protein operates within cell wall biogenesis; peptidoglycan biosynthesis. Functionally, cell wall formation. Catalyzes the addition of glutamate to the nucleotide precursor UDP-N-acetylmuramoyl-L-alanine (UMA). The polypeptide is UDP-N-acetylmuramoylalanine--D-glutamate ligase (Rhizobium johnstonii (strain DSM 114642 / LMG 32736 / 3841) (Rhizobium leguminosarum bv. viciae)).